Reading from the N-terminus, the 72-residue chain is Translation initiation factor IF-1 (72 aa).

The region spanning 1–72 (MSKEEVLEFS…TKGRITYRYK (72 aa)) is the S1-like domain.

This sequence belongs to the IF-1 family. As to quaternary structure, component of the 30S ribosomal translation pre-initiation complex which assembles on the 30S ribosome in the order IF-2 and IF-3, IF-1 and N-formylmethionyl-tRNA(fMet); mRNA recruitment can occur at any time during PIC assembly.

It is found in the cytoplasm. Its function is as follows. One of the essential components for the initiation of protein synthesis. Stabilizes the binding of IF-2 and IF-3 on the 30S subunit to which N-formylmethionyl-tRNA(fMet) subsequently binds. Helps modulate mRNA selection, yielding the 30S pre-initiation complex (PIC). Upon addition of the 50S ribosomal subunit IF-1, IF-2 and IF-3 are released leaving the mature 70S translation initiation complex. This is Translation initiation factor IF-1 from Bartonella quintana (strain Toulouse) (Rochalimaea quintana).